A 434-amino-acid chain; its full sequence is Histidine--tRNA ligase (434 aa).

It belongs to the class-II aminoacyl-tRNA synthetase family. Homodimer.

It localises to the cytoplasm. The catalysed reaction is tRNA(His) + L-histidine + ATP = L-histidyl-tRNA(His) + AMP + diphosphate + H(+). This Latilactobacillus sakei subsp. sakei (strain 23K) (Lactobacillus sakei subsp. sakei) protein is Histidine--tRNA ligase.